The following is a 172-amino-acid chain: MAKMQAKVQADERDDGLREKMISVNRVTKVVKGGRILGFAALTVVGDGDGRVGMGKGKAKEVPVAVQKAMEQARRNMFKVPLKNGTLQHEVHGKHGASTVLLAPAKDGTGVIAGGPMRAVFDVMGVQNVVAKSHGSTNPYNLVRATLDGLRKQSTPGDIAAKRGKSVEEILG.

In terms of domain architecture, S5 DRBM spans 17-80 (LREKMISVNR…EQARRNMFKV (64 aa)).

It belongs to the universal ribosomal protein uS5 family. As to quaternary structure, part of the 30S ribosomal subunit. Contacts proteins S4 and S8.

With S4 and S12 plays an important role in translational accuracy. Functionally, located at the back of the 30S subunit body where it stabilizes the conformation of the head with respect to the body. The chain is Small ribosomal subunit protein uS5 from Burkholderia thailandensis (strain ATCC 700388 / DSM 13276 / CCUG 48851 / CIP 106301 / E264).